A 291-amino-acid chain; its full sequence is Ribosomal RNA small subunit methyltransferase H (291 aa).

S-adenosyl-L-methionine is bound by residues 25 to 27 (GGH), Asp-45, Phe-73, Asp-88, and Gln-95.

The protein belongs to the methyltransferase superfamily. RsmH family.

It localises to the cytoplasm. It catalyses the reaction cytidine(1402) in 16S rRNA + S-adenosyl-L-methionine = N(4)-methylcytidine(1402) in 16S rRNA + S-adenosyl-L-homocysteine + H(+). Specifically methylates the N4 position of cytidine in position 1402 (C1402) of 16S rRNA. This Flavobacterium psychrophilum (strain ATCC 49511 / DSM 21280 / CIP 103535 / JIP02/86) protein is Ribosomal RNA small subunit methyltransferase H.